Here is a 318-residue protein sequence, read N- to C-terminus: MFLINVLTVTLPILPAVAFLTLVERKALGYMQLRKGPNVVGPYGLLQPIADAIKLFTKEPIYPQTSSKFLFTVAPILALTLALTVWAPLPMPYPLINLNLSLLFILAMSSLMVYSILWSGWASNSKYALMGALRAVAQTISYEVSMTTITLSMVLMNGSFTLTAFATTQEHLWLIFPMWPLMMMWFTSTLAETNRAPFDLTEGESELVSGFNVEYSAGPFALFFMAEYANIIMMNALTVILFMGTSCDPQMPEISTINFVMKTIILTICFLWVRASYPRFRYDQLMYLLWKNFLPLTLALCMWHISILISLACIPPQA.

8 helical membrane-spanning segments follow: residues 2–22 (FLIN…FLTL), 69–89 (FLFT…WAPL), 102–122 (LLFI…SGWA), 146–166 (MTTI…TAFA), 171–191 (HLWL…STLA), 222–242 (LFFM…VILF), 253–273 (EIST…FLWV), and 294–314 (LPLT…LACI).

Belongs to the complex I subunit 1 family. Core subunit of respiratory chain NADH dehydrogenase (Complex I) which is composed of 45 different subunits.

It is found in the mitochondrion inner membrane. It carries out the reaction a ubiquinone + NADH + 5 H(+)(in) = a ubiquinol + NAD(+) + 4 H(+)(out). Its function is as follows. Core subunit of the mitochondrial membrane respiratory chain NADH dehydrogenase (Complex I) which catalyzes electron transfer from NADH through the respiratory chain, using ubiquinone as an electron acceptor. Essential for the catalytic activity and assembly of complex I. The chain is NADH-ubiquinone oxidoreductase chain 1 (MT-ND1) from Elephas maximus (Indian elephant).